The chain runs to 575 residues: 5-aminolevulinate synthase, mitochondrial (575 aa).

The N-terminal 55 residues, 1–55 (MESITRVSMSVCPFVKSSSAQALRQLSKNSALTSQARQCPFMGAALNAKESTRSY), are a transit peptide targeting the mitochondrion. Residues arginine 124, serine 237, and lysine 256 each contribute to the substrate site. Residues serine 289, histidine 317, and threonine 361 each contribute to the pyridoxal 5'-phosphate site. Lysine 364 is a catalytic residue. An N6-(pyridoxal phosphate)lysine modification is found at lysine 364. Pyridoxal 5'-phosphate is bound by residues threonine 393 and threonine 394. Threonine 479 provides a ligand contact to substrate.

It belongs to the class-II pyridoxal-phosphate-dependent aminotransferase family. Homodimer. Pyridoxal 5'-phosphate is required as a cofactor.

The protein localises to the mitochondrion matrix. The catalysed reaction is succinyl-CoA + glycine + H(+) = 5-aminolevulinate + CO2 + CoA. The protein operates within porphyrin-containing compound metabolism; protoporphyrin-IX biosynthesis; 5-aminolevulinate from glycine: step 1/1. Catalyzes the synthesis of 5-aminolevulinate (ALA) from succinyl-CoA and glycine, the first and rate-limiting step in heme biosynthesis. In Debaryomyces hansenii (strain ATCC 36239 / CBS 767 / BCRC 21394 / JCM 1990 / NBRC 0083 / IGC 2968) (Yeast), this protein is 5-aminolevulinate synthase, mitochondrial (HEM1).